A 250-amino-acid polypeptide reads, in one-letter code: Eukaryotic translation initiation factor 3 subunit K (250 aa).

Residues 54–235 (YDLFGNLAIL…DVKAGVVKEN (182 aa)) enclose the PCI domain.

The protein belongs to the eIF-3 subunit K family. In terms of assembly, component of the eukaryotic translation initiation factor 3 (eIF-3) complex.

The protein resides in the cytoplasm. In terms of biological role, component of the eukaryotic translation initiation factor 3 (eIF-3) complex, which is involved in protein synthesis of a specialized repertoire of mRNAs and, together with other initiation factors, stimulates binding of mRNA and methionyl-tRNAi to the 40S ribosome. The eIF-3 complex specifically targets and initiates translation of a subset of mRNAs involved in cell proliferation. This Cryptococcus neoformans var. neoformans serotype D (strain B-3501A) (Filobasidiella neoformans) protein is Eukaryotic translation initiation factor 3 subunit K.